A 559-amino-acid polypeptide reads, in one-letter code: Prolyl 4-hydroxylase subunit alpha-1 (559 aa).

An N-terminal signal peptide occupies residues 1–16; that stretch reads MRLALLVLATIGYAVA. N158 carries N-linked (GlcNAc...) asparagine glycosylation. The region spanning 404 to 512 is the Fe2OG dioxygenase domain; sequence TAEELQIANY…KWVSNKWIHE (109 aa). Residues H422, D424, and H493 each coordinate Fe cation. K503 lines the 2-oxoglutarate pocket.

It belongs to the P4HA family. Heterotetramer of two alpha chains and two beta chains. Exists either as a phy-1(2)/pdi-2(2) tetramer or as a phy-1/phy-2/pdi-2(2) tetramer. Fe(2+) is required as a cofactor. It depends on L-ascorbate as a cofactor.

It localises to the endoplasmic reticulum lumen. It carries out the reaction L-prolyl-[collagen] + 2-oxoglutarate + O2 = trans-4-hydroxy-L-prolyl-[collagen] + succinate + CO2. Catalyzes the post-translational formation of 4-hydroxyproline in -Xaa-Pro-Gly- sequences in collagens and other proteins. This is Prolyl 4-hydroxylase subunit alpha-1 (dpy-18) from Caenorhabditis elegans.